Here is a 386-residue protein sequence, read N- to C-terminus: Probable dual-specificity RNA methyltransferase RlmN (386 aa).

Catalysis depends on Glu-123, which acts as the Proton acceptor. The Radical SAM core domain maps to 129–372 (YPTRTTLCIS…ATLRDTRGQD (244 aa)). A disulfide bridge connects residues Cys-136 and Cys-377. Residues Cys-143, Cys-147, and Cys-150 each contribute to the [4Fe-4S] cluster site. S-adenosyl-L-methionine is bound by residues 198-199 (GE), Ser-232, 255-257 (SLH), and Asn-334. Catalysis depends on Cys-377, which acts as the S-methylcysteine intermediate.

It belongs to the radical SAM superfamily. RlmN family. The cofactor is [4Fe-4S] cluster.

The protein localises to the cytoplasm. The enzyme catalyses adenosine(2503) in 23S rRNA + 2 reduced [2Fe-2S]-[ferredoxin] + 2 S-adenosyl-L-methionine = 2-methyladenosine(2503) in 23S rRNA + 5'-deoxyadenosine + L-methionine + 2 oxidized [2Fe-2S]-[ferredoxin] + S-adenosyl-L-homocysteine. It carries out the reaction adenosine(37) in tRNA + 2 reduced [2Fe-2S]-[ferredoxin] + 2 S-adenosyl-L-methionine = 2-methyladenosine(37) in tRNA + 5'-deoxyadenosine + L-methionine + 2 oxidized [2Fe-2S]-[ferredoxin] + S-adenosyl-L-homocysteine. Specifically methylates position 2 of adenine 2503 in 23S rRNA and position 2 of adenine 37 in tRNAs. In Bifidobacterium adolescentis (strain ATCC 15703 / DSM 20083 / NCTC 11814 / E194a), this protein is Probable dual-specificity RNA methyltransferase RlmN.